A 521-amino-acid polypeptide reads, in one-letter code: C-22 sterol desaturase erg5 (521 aa).

Residues A30–I50 form a helical membrane-spanning segment.

Belongs to the cytochrome P450 family. Heme serves as cofactor.

It is found in the endoplasmic reticulum membrane. It carries out the reaction 5-dehydroepisterol + NADPH + O2 + H(+) = ergosta-5,7,22,24(28)-tetraen-3beta-ol + NADP(+) + 2 H2O. It functions in the pathway steroid metabolism; ergosterol biosynthesis. In terms of biological role, C-22 sterol desaturase; part of the third module of ergosterol biosynthesis pathway that includes the late steps of the pathway. Erg5 converts 5-dehydroepisterol into ergosta-5,7,22,24(28)-tetraen-3beta-ol by forming the C-22(23) double bond in the sterol side chain. The third module or late pathway involves the ergosterol synthesis itself through consecutive reactions that mainly occur in the endoplasmic reticulum (ER) membrane. Firstly, the squalene synthase erg9 catalyzes the condensation of 2 farnesyl pyrophosphate moieties to form squalene, which is the precursor of all steroids. Squalene synthase is crucial for balancing the incorporation of farnesyl diphosphate (FPP) into sterol and nonsterol isoprene synthesis. Secondly, squalene is converted into lanosterol by the consecutive action of the squalene epoxidase erg1 and the lanosterol synthase erg7. Then, the delta(24)-sterol C-methyltransferase erg6 methylates lanosterol at C-24 to produce eburicol. Eburicol is the substrate of the sterol 14-alpha demethylase encoded by cyp51A and cyp51B, to yield 4,4,24-trimethyl ergosta-8,14,24(28)-trienol. The C-14 reductase erg24 then reduces the C14=C15 double bond which leads to 4,4-dimethylfecosterol. A sequence of further demethylations at C-4, involving the C-4 demethylation complex containing the C-4 methylsterol oxidases erg25A or erg25B, the sterol-4-alpha-carboxylate 3-dehydrogenase erg26 and the 3-keto-steroid reductase erg27, leads to the production of fecosterol via 4-methylfecosterol. The C-8 sterol isomerase erg2 then catalyzes the reaction which results in unsaturation at C-7 in the B ring of sterols and thus converts fecosterol to episterol. The sterol-C5-desaturase erg3B then catalyzes the introduction of a C-5 double bond in the B ring to produce 5-dehydroepisterol. The 2 other sterol-C5-desaturases, erg3A and erg3C, seem to be less important in ergosterol biosynthesis. The C-22 sterol desaturase erg5 further converts 5-dehydroepisterol into ergosta-5,7,22,24(28)-tetraen-3beta-ol by forming the C-22(23) double bond in the sterol side chain. Finally, ergosta-5,7,22,24(28)-tetraen-3beta-ol is substrate of the C-24(28) sterol reductases erg4A and erg4B to produce ergosterol. Possible alternative sterol biosynthetic pathways might exist from fecosterol to ergosterol, depending on the activities of the erg3 isoforms. This chain is C-22 sterol desaturase erg5, found in Aspergillus fumigatus (strain ATCC MYA-4609 / CBS 101355 / FGSC A1100 / Af293) (Neosartorya fumigata).